The sequence spans 426 residues: Serine--tRNA ligase (426 aa).

Thr233–Glu235 provides a ligand contact to L-serine. Arg264–Glu266 lines the ATP pocket. Position 287 (Glu287) interacts with L-serine. Glu351–Ser354 serves as a coordination point for ATP. Residue Ser387 coordinates L-serine.

The protein belongs to the class-II aminoacyl-tRNA synthetase family. Type-1 seryl-tRNA synthetase subfamily. Homodimer. The tRNA molecule binds across the dimer.

The protein localises to the cytoplasm. The catalysed reaction is tRNA(Ser) + L-serine + ATP = L-seryl-tRNA(Ser) + AMP + diphosphate + H(+). It catalyses the reaction tRNA(Sec) + L-serine + ATP = L-seryl-tRNA(Sec) + AMP + diphosphate + H(+). It functions in the pathway aminoacyl-tRNA biosynthesis; selenocysteinyl-tRNA(Sec) biosynthesis; L-seryl-tRNA(Sec) from L-serine and tRNA(Sec): step 1/1. In terms of biological role, catalyzes the attachment of serine to tRNA(Ser). Is also able to aminoacylate tRNA(Sec) with serine, to form the misacylated tRNA L-seryl-tRNA(Sec), which will be further converted into selenocysteinyl-tRNA(Sec). The chain is Serine--tRNA ligase from Colwellia psychrerythraea (strain 34H / ATCC BAA-681) (Vibrio psychroerythus).